The primary structure comprises 207 residues: rRNA N(6)-adenosine-methyltransferase METTL5 (207 aa).

S-adenosyl-L-methionine is bound by residues Q25, T28, G56, C59, V61, D78, and 105–106 (DV).

This sequence belongs to the methyltransferase superfamily. PrmA family.

The protein localises to the nucleus. Its subcellular location is the presynapse. It localises to the postsynapse. It catalyses the reaction adenosine(1832) in 18S rRNA + S-adenosyl-L-methionine = N(6)-methyladenosine(1832) in 18S rRNA + S-adenosyl-L-homocysteine + H(+). Its activity is regulated as follows. rRNA N6-adenosine-methyltransferase activity is inhibited by zinc. Catalytic subunit of a heterodimer with TRMT112, which specifically methylates the 6th position of adenine in position 1832 of 18S rRNA. N6-methylation of adenine(1832) in 18S rRNA resides in the decoding center of 18S rRNA and is required for translation and embryonic stem cells (ESCs) pluripotency and differentiation. The polypeptide is rRNA N(6)-adenosine-methyltransferase METTL5 (Danio rerio (Zebrafish)).